The primary structure comprises 485 residues: Glutamyl-tRNA(Gln) amidotransferase subunit A (485 aa).

Active-site charge relay system residues include Lys-79 and Ser-154. The active-site Acyl-ester intermediate is Ser-178.

This sequence belongs to the amidase family. GatA subfamily. As to quaternary structure, heterotrimer of A, B and C subunits.

It carries out the reaction L-glutamyl-tRNA(Gln) + L-glutamine + ATP + H2O = L-glutaminyl-tRNA(Gln) + L-glutamate + ADP + phosphate + H(+). Its function is as follows. Allows the formation of correctly charged Gln-tRNA(Gln) through the transamidation of misacylated Glu-tRNA(Gln) in organisms which lack glutaminyl-tRNA synthetase. The reaction takes place in the presence of glutamine and ATP through an activated gamma-phospho-Glu-tRNA(Gln). In Staphylococcus aureus (strain Mu3 / ATCC 700698), this protein is Glutamyl-tRNA(Gln) amidotransferase subunit A.